We begin with the raw amino-acid sequence, 460 residues long: 2-methylcitrate synthase, mitochondrial (460 aa).

The N-terminal 24 residues, 1–24 (MALPLRTARHASRLAQTIGRRGYA), are a transit peptide targeting the mitochondrion. CoA is bound by residues arginine 69 and lysine 187. Histidine 264 provides a ligand contact to oxaloacetate. Leucine 299 contributes to the CoA binding site. Residue histidine 300 is part of the active site. Residues valine 341, glycine 343, and tyrosine 344 each coordinate CoA. Residues histidine 346 and arginine 355 each coordinate oxaloacetate. The active site involves histidine 346. The CoA site is built by threonine 395, lysine 396, and asparagine 401. Residue aspartate 403 is part of the active site. Oxaloacetate-binding residues include arginine 429 and arginine 449.

The protein belongs to the citrate synthase family. In terms of assembly, homodimer.

The protein resides in the mitochondrion matrix. The catalysed reaction is propanoyl-CoA + oxaloacetate + H2O = (2S,3S)-2-methylcitrate + CoA + H(+). It catalyses the reaction oxaloacetate + acetyl-CoA + H2O = citrate + CoA + H(+). It participates in organic acid metabolism; propanoate degradation. Its activity is regulated as follows. Partially inhibited by ATP. Its function is as follows. Catalyzes the synthesis of (2S,3S)-2-methylcitrate from propionyl-CoA and oxaloacetate and also from acetyl-CoA and oxaloacetate with a greater efficiency. Also has citrate synthase activity and can substitute for the loss of citA activity. The polypeptide is 2-methylcitrate synthase, mitochondrial (Emericella nidulans (strain FGSC A4 / ATCC 38163 / CBS 112.46 / NRRL 194 / M139) (Aspergillus nidulans)).